A 479-amino-acid polypeptide reads, in one-letter code: UDP-N-acetylmuramoyl-L-alanyl-D-glutamate--2,6-diaminopimelate ligase (479 aa).

Ser-21 serves as a coordination point for UDP-N-acetyl-alpha-D-muramoyl-L-alanyl-D-glutamate. Position 98–104 (98–104 (GTNGKSS)) interacts with ATP. UDP-N-acetyl-alpha-D-muramoyl-L-alanyl-D-glutamate-binding positions include 144–145 (TT), Ser-171, Gln-177, and Arg-179. N6-carboxylysine is present on Lys-211. Meso-2,6-diaminopimelate is bound by residues Arg-372, 396-399 (DNPR), Gly-446, and Glu-450. The Meso-diaminopimelate recognition motif motif lies at 396–399 (DNPR).

This sequence belongs to the MurCDEF family. MurE subfamily. It depends on Mg(2+) as a cofactor. Post-translationally, carboxylation is probably crucial for Mg(2+) binding and, consequently, for the gamma-phosphate positioning of ATP.

It localises to the cytoplasm. The catalysed reaction is UDP-N-acetyl-alpha-D-muramoyl-L-alanyl-D-glutamate + meso-2,6-diaminopimelate + ATP = UDP-N-acetyl-alpha-D-muramoyl-L-alanyl-gamma-D-glutamyl-meso-2,6-diaminopimelate + ADP + phosphate + H(+). It functions in the pathway cell wall biogenesis; peptidoglycan biosynthesis. In terms of biological role, catalyzes the addition of meso-diaminopimelic acid to the nucleotide precursor UDP-N-acetylmuramoyl-L-alanyl-D-glutamate (UMAG) in the biosynthesis of bacterial cell-wall peptidoglycan. The chain is UDP-N-acetylmuramoyl-L-alanyl-D-glutamate--2,6-diaminopimelate ligase from Rickettsia montanensis.